An 820-amino-acid polypeptide reads, in one-letter code: Probable ATP-dependent RNA helicase DDX23 (820 aa).

Over residues 1-42 the composition is skewed to basic and acidic residues; the sequence is MAGELADKKDRDASPSKEERKRSRTPDRERDRDRDRKSSPSK. The segment at 1 to 244 is disordered; that stretch reads MAGELADKKD…QKIREEKDKS (244 aa). A phosphoserine mark is found at Ser14 and Ser16. The span at 43–65 shows a compositional bias: basic residues; the sequence is DRKRHRSRDRRRGGSRSRSRSRS. Residues 66 to 105 are compositionally biased toward basic and acidic residues; the sequence is KSAERERRHKERERDKERDRNKKDRDRDKDGHRRDKDRKR. 2 positions are modified to phosphoserine: Ser107 and Ser109. Composition is skewed to basic and acidic residues over residues 112-137, 147-226, and 233-244; these read RGKDFKSRKDRDSKKDEEDEHGDKKP, LLAK…RETN, and GRQKIREEKDKS. The Q motif signature appears at 391 to 419; that stretch reads RSWKDSSLPPHILEVIDKCGYKEPTPIQR. The Helicase ATP-binding domain occupies 422-627; it reads IPIGLQNRDI…RSYLRRPAVV (206 aa). An ATP-binding site is contributed by 435-442; sequence AETGSGKT. Residues 549–552 carry the DEAD box motif; the sequence is DEAD. A Helicase C-terminal domain is found at 651–799; that stretch reads KRKKLLAILE…SCPPELANHP (149 aa). Glycyl lysine isopeptide (Lys-Gly) (interchain with G-Cter in SUMO2) cross-links involve residues Lys686 and Lys811.

It belongs to the DEAD box helicase family. DDX23/PRP28 subfamily. The phosphorylated form (by SRPK2) is a component of the U4/U6-U5 tri-snRNP complex composed of the U4, U6 and U5 snRNAs and at least PRPF3, PRPF4, PRPF6, PRPF8, PRPF31, SNRNP200, TXNL4A, WDR57, SNRNP40, DDX23, CD2BP2, PPIH, SNU13, EFTUD2, SART1 and USP39. Identified in the spliceosome C complex. Interacts with ERBB4. Interacts with ERCC6. In vitro phosphorylated by CLK1 and U1 snRNP-associated protein kinase. Phosphorylated by SRPK2 and this phosphorylation is required for its association with the tri-snRNP (U4/U6-U5 tri-small nuclear ribonucleoproteins) and subsequent spliceosomal B complex formation. May be phosphorylated by SRPK2 on Ser residues in the SR domain; the phosphorylation is required for the removal of inappropriate R-loops during transcription.

It localises to the nucleus. It is found in the chromosome. It catalyses the reaction ATP + H2O = ADP + phosphate + H(+). In terms of biological role, involved in pre-mRNA splicing and its phosphorylated form (by SRPK2) is required for spliceosomal B complex formation. Independently of its spliceosome formation function, required for the suppression of incorrect R-loops formed during transcription; R-loops are composed of a DNA:RNA hybrid and the associated non-template single-stranded DNA. This Pongo abelii (Sumatran orangutan) protein is Probable ATP-dependent RNA helicase DDX23.